The chain runs to 349 residues: Fructose-1,6-bisphosphatase class 1 (349 aa).

Mg(2+) is bound by residues Glu-113, Asp-135, Ile-137, and Asp-138. Residues 138-141, Asn-230, Tyr-258, and Lys-288 contribute to the substrate site; that span reads DGSS. Residue Glu-294 coordinates Mg(2+).

It belongs to the FBPase class 1 family. In terms of assembly, homotetramer. It depends on Mg(2+) as a cofactor.

The protein resides in the cytoplasm. It catalyses the reaction beta-D-fructose 1,6-bisphosphate + H2O = beta-D-fructose 6-phosphate + phosphate. It participates in carbohydrate biosynthesis; Calvin cycle. The chain is Fructose-1,6-bisphosphatase class 1 from Trichormus variabilis (strain ATCC 29413 / PCC 7937) (Anabaena variabilis).